The following is a 683-amino-acid chain: U4/U6 small nuclear ribonucleoprotein Prp3 (683 aa).

The 87-residue stretch at 1–87 (MALSKRELDE…HSKSSSDRSR (87 aa)) folds into the PWI domain. The span at 73–107 (GRSSRHSKSSSDRSRKRDLKEVFGDDSEISKESSG) shows a compositional bias: basic and acidic residues. The interval 73 to 135 (GRSSRHSKSS…IPGPPSESPG (63 aa)) is disordered. K139 participates in a covalent cross-link: Glycyl lysine isopeptide (Lys-Gly) (interchain with G-Cter in SUMO2). The interval 153–183 (IEERKKQLSFISPPTPQPKTPSSSQPERLPI) is disordered. S164 is modified (phosphoserine). Phosphothreonine is present on T167. Residues K244 and K252 each participate in a glycyl lysine isopeptide (Lys-Gly) (interchain with G-Cter in SUMO2) cross-link. The interval 416 to 550 (NLVEHPAQLN…VHISVYRVRN (135 aa)) is mediates interaction with SART3. Residue S619 is modified to Phosphoserine.

As to quaternary structure, component of the precatalytic spliceosome (spliceosome B complex). Component of the U4/U6-U5 tri-snRNP complex, a building block of the precatalytic spliceosome (spliceosome B complex). The U4/U6-U5 tri-snRNP complex is composed of the U4, U6 and U5 snRNAs and at least PRPF3, PRPF4, PRPF6, PRPF8, PRPF31, SNRNP200, TXNL4A, SNRNP40, SNRPB, SNRPD1, SNRPD2, SNRPD3, SNRPE, SNRPF, SNRPG, DDX23, CD2BP2, PPIH, SNU13, EFTUD2, SART1 and USP39, plus LSM2, LSM3, LSM4, LSM5, LSM6, LSM7 and LSM8. Interacts directly with PRPF4. Part of a heteromeric complex containing PPIH, PRPF3 and PRPF4 that is stable in the absence of RNA. Interacts with SART3; the interaction is direct and recruits the deubiquitinase USP4 to PRPF3. Interacts with PRPF19. Interacts ('Lys-63'-linked polyubiquitinated) with PRPF8 (via the MPN (JAB/Mov34) domain); may stabilize the U4/U6-U5 tri-snRNP complex. Interacts with ERCC6. Post-translationally, ubiquitinated. Undergoes 'Lys-63'-linked polyubiquitination by PRPF19 and deubiquitination by USP4. 'Lys-63'-linked ubiquitination increases the affinity for PRPF8 and may regulate the assembly of the U4/U6-U5 tri-snRNP complex.

The protein resides in the nucleus. The protein localises to the nucleus speckle. Functionally, plays a role in pre-mRNA splicing as component of the U4/U6-U5 tri-snRNP complex that is involved in spliceosome assembly, and as component of the precatalytic spliceosome (spliceosome B complex). This chain is U4/U6 small nuclear ribonucleoprotein Prp3 (PRPF3), found in Bos taurus (Bovine).